Reading from the N-terminus, the 898-residue chain is Phosphoenolpyruvate carboxylase (898 aa).

Residues His138 and Lys561 contribute to the active site.

This sequence belongs to the PEPCase type 1 family. Mg(2+) is required as a cofactor.

It carries out the reaction oxaloacetate + phosphate = phosphoenolpyruvate + hydrogencarbonate. Its function is as follows. Forms oxaloacetate, a four-carbon dicarboxylic acid source for the tricarboxylic acid cycle. The chain is Phosphoenolpyruvate carboxylase from Streptococcus pneumoniae serotype 4 (strain ATCC BAA-334 / TIGR4).